The chain runs to 62 residues: Alpha-conotoxin-like Bn1.3 (62 aa).

The signal sequence occupies residues 1–18 (MGMRMMFTVFLLVVLATA). Residues 19–48 (VLPVTLDRASDGRNAAANAKTPRLIAPFIR) constitute a propeptide that is removed on maturation. 2 cysteine pairs are disulfide-bonded: Cys-51-Cys-57 and Cys-52-Cys-61. Cys-61 carries the post-translational modification Cysteine amide.

The protein belongs to the conotoxin A superfamily. Expressed by the venom duct.

Its subcellular location is the secreted. In terms of biological role, does not show activity on the acetylcholine receptors tested. This is Alpha-conotoxin-like Bn1.3 from Conus bandanus (Banded marble cone).